The following is a 286-amino-acid chain: Polyamine aminopropyltransferase (286 aa).

The 234-residue stretch at 5–238 (TMWHETLHDQ…GIMTFAWATN (234 aa)) folds into the PABS domain. Glutamine 33 serves as a coordination point for S-methyl-5'-thioadenosine. The spermidine site is built by histidine 64 and aspartate 88. Residues glutamate 108 and 140–141 (DG) each bind S-methyl-5'-thioadenosine. Aspartate 158 functions as the Proton acceptor in the catalytic mechanism. 158-161 (DCTD) provides a ligand contact to spermidine. Proline 165 contributes to the S-methyl-5'-thioadenosine binding site.

The protein belongs to the spermidine/spermine synthase family. As to quaternary structure, homodimer or homotetramer.

It is found in the cytoplasm. It carries out the reaction S-adenosyl 3-(methylsulfanyl)propylamine + putrescine = S-methyl-5'-thioadenosine + spermidine + H(+). It participates in amine and polyamine biosynthesis; spermidine biosynthesis; spermidine from putrescine: step 1/1. Its function is as follows. Catalyzes the irreversible transfer of a propylamine group from the amino donor S-adenosylmethioninamine (decarboxy-AdoMet) to putrescine (1,4-diaminobutane) to yield spermidine. This Salmonella paratyphi B (strain ATCC BAA-1250 / SPB7) protein is Polyamine aminopropyltransferase.